Consider the following 277-residue polypeptide: GPALPP motifs-containing protein 1 (277 aa).

Residues 1–240 are disordered; sequence MARDLIGPAL…VWTDTPADRE (240 aa). Ala-2 is subject to N-acetylalanine. The GPALPP motif 1 signature appears at 7 to 12; it reads GPALPP. Ser-28 is subject to Phosphoserine. The GPALPP motif 2 motif lies at 32 to 37; it reads GPALPP. 2 stretches are compositionally biased toward acidic residues: residues 60-69 and 81-90; these read GNQESEEDDT and DDDDDDDDEG. Residues 93-98 carry the GPALPP motif 3 motif; it reads GPALPP. Ser-106 carries the phosphoserine modification. Over residues 108–117 the composition is skewed to pro residues; sequence PRPMIGPALP. Residues 113–118 carry the GPALPP motif 4 motif; sequence GPALPP. Ser-138 and Ser-143 each carry phosphoserine. Phosphothreonine is present on Thr-147. A phosphoserine mark is found at Ser-149 and Ser-150. Positions 172 to 196 are enriched in basic and acidic residues; that stretch reads EFEKRAQRMKEKLTKGDDDSSKPIT.

The protein is GPALPP motifs-containing protein 1 (GPALPP1) of Bos taurus (Bovine).